The following is a 415-amino-acid chain: 2-oxoadipate dioxygenase/decarboxylase (415 aa).

Positions 66, 70, and 225 each coordinate 2-oxoadipate. Histidine 66 contacts Fe(2+). Residues histidine 225 and glutamate 296 each coordinate Fe(2+). Alanine 361 provides a ligand contact to 2-oxoadipate.

This sequence belongs to the 2-oxoadipate dioxygenase/decarboxylase family. The cofactor is Fe(2+).

The enzyme catalyses 2-oxoadipate + O2 = (R)-2-hydroxyglutarate + CO2. Catalyzes the decarboxylation and hydroxylation of 2-oxoadipate (2OA) to form D-2-hydroxyglutarate (D-2-HGA). The sequence is that of 2-oxoadipate dioxygenase/decarboxylase from Mycobacterium bovis (strain ATCC BAA-935 / AF2122/97).